We begin with the raw amino-acid sequence, 876 residues long: Alanine--tRNA ligase (876 aa).

The Zn(2+) site is built by His568, His572, Cys670, and His674.

The protein belongs to the class-II aminoacyl-tRNA synthetase family. Zn(2+) is required as a cofactor.

Its subcellular location is the cytoplasm. It catalyses the reaction tRNA(Ala) + L-alanine + ATP = L-alanyl-tRNA(Ala) + AMP + diphosphate. Catalyzes the attachment of alanine to tRNA(Ala) in a two-step reaction: alanine is first activated by ATP to form Ala-AMP and then transferred to the acceptor end of tRNA(Ala). Also edits incorrectly charged Ser-tRNA(Ala) and Gly-tRNA(Ala) via its editing domain. The protein is Alanine--tRNA ligase of Anaplasma phagocytophilum (strain HZ).